The chain runs to 131 residues: Large ribosomal subunit protein eL32 (131 aa).

It belongs to the eukaryotic ribosomal protein eL32 family.

This Candida glabrata (strain ATCC 2001 / BCRC 20586 / JCM 3761 / NBRC 0622 / NRRL Y-65 / CBS 138) (Yeast) protein is Large ribosomal subunit protein eL32 (RPL32).